Here is a 131-residue protein sequence, read N- to C-terminus: GATA zinc finger domain-containing protein 2 (131 aa).

A compositionally biased stretch (low complexity) spans 21–55 (STATDATSADGAASETDAASATDTTSATDPTSATD). Residues 21–85 (STATDATSAD…RGRPYISTPP (65 aa)) are disordered. Polar residues predominate over residues 57–74 (IATTNTTGITSSGPTTNG). The GATA-type zinc-finger motif lies at 88–115 (CYDCGRTRSPYWRKGTYNGQVVHLCNAC).

This Dictyostelium discoideum (Social amoeba) protein is GATA zinc finger domain-containing protein 2 (comH).